A 444-amino-acid polypeptide reads, in one-letter code: F-box protein At1g53790 (444 aa).

Residues 76–125 (VSCFRYIPIDLLMDIFSRVPAKSIARFRCVSKLWESILCRPDFKELFMTM) form the F-box domain.

The protein is F-box protein At1g53790 of Arabidopsis thaliana (Mouse-ear cress).